The sequence spans 82 residues: MPKKAEKPASFETALKELEQIVTRLESGELPLEQALNEFEQGVQLARQGQKTLQQAEQRVQILLNDTPDAPLAPFAPENDAL.

This sequence belongs to the XseB family. In terms of assembly, heterooligomer composed of large and small subunits.

The protein localises to the cytoplasm. The catalysed reaction is Exonucleolytic cleavage in either 5'- to 3'- or 3'- to 5'-direction to yield nucleoside 5'-phosphates.. In terms of biological role, bidirectionally degrades single-stranded DNA into large acid-insoluble oligonucleotides, which are then degraded further into small acid-soluble oligonucleotides. In Sodalis glossinidius (strain morsitans), this protein is Exodeoxyribonuclease 7 small subunit.